The sequence spans 443 residues: ATP-dependent protease ATPase subunit HslU (443 aa).

ATP-binding positions include Val18 and 60–65 (GVGKTE). The segment at 139–160 (AKNNWGQPEESGEPSSARQNFR) is disordered. Residues Asp256, Glu321, and Arg393 each contribute to the ATP site.

It belongs to the ClpX chaperone family. HslU subfamily. As to quaternary structure, a double ring-shaped homohexamer of HslV is capped on each side by a ring-shaped HslU homohexamer. The assembly of the HslU/HslV complex is dependent on binding of ATP.

It localises to the cytoplasm. Functionally, ATPase subunit of a proteasome-like degradation complex; this subunit has chaperone activity. The binding of ATP and its subsequent hydrolysis by HslU are essential for unfolding of protein substrates subsequently hydrolyzed by HslV. HslU recognizes the N-terminal part of its protein substrates and unfolds these before they are guided to HslV for hydrolysis. This is ATP-dependent protease ATPase subunit HslU from Sodalis glossinidius (strain morsitans).